The sequence spans 330 residues: Catharanthine synthase (330 aa).

Positions 81–83 (HGA) match the Involved in the stabilization of the negatively charged intermediate by the formation of the oxyanion hole motif. Gly-84 is a binding site for catharanthine. Ser-173 (proton acceptor) is an active-site residue. Residue Asp-274 is part of the active site. Tyr-305 is a binding site for catharanthine. Tyr-305 serves as the catalytic Proton donor/acceptor.

This sequence belongs to the 'GDXG' lipolytic enzyme family. Interacts with dehydroprecondylocarpine acetate synthase (DPAS). As to expression, expressed in leaf epidermis.

It is found in the cytoplasm. The protein resides in the cytosol. The protein localises to the nucleus. The catalysed reaction is dehydrosecodine = catharanthine. It functions in the pathway alkaloid biosynthesis. Its function is as follows. Component of iboga and aspidosperma monoterpenoid indole alkaloids (MIAs, e.g. tabersonine and catharanthine) biosynthesis pathway from 19E-geissoschizine, psychoactive compounds likely to be used in the treatment of opioid dependence. Catalyzes the conversion of dehydrosecodine to catharanthine. This chain is Catharanthine synthase, found in Catharanthus roseus (Madagascar periwinkle).